A 566-amino-acid polypeptide reads, in one-letter code: Putative lipase ATG15 (566 aa).

Residues 1 to 17 (MGSKHKKNASKSLRAFS) are Cytoplasmic-facing. A helical; Signal-anchor for type II membrane protein transmembrane segment spans residues 18-38 (FIILSASIALVYIFNPVKLIF). Residues 39–566 (PSSIIRFHHG…CVEWGDEEDA (528 aa)) lie on the Lumenal side of the membrane. N-linked (GlcNAc...) asparagine glycosylation is found at asparagine 264 and asparagine 348. The active-site Charge relay system is serine 366. N-linked (GlcNAc...) asparagine glycosylation is present at asparagine 483. Residues 507-545 (DSLDDEPPLPNPLRPGKPSTTSSSQHHTSTTTTTETSRP) form a disordered region. A compositionally biased stretch (low complexity) spans 522 to 543 (GKPSTTSSSQHHTSTTTTTETS).

The protein belongs to the AB hydrolase superfamily. Lipase family. Binds to both phosphatidylinositol (PI) and phosphatidylinositol 3,5-bisphosphate (PIP2).

The protein localises to the endosome. It localises to the multivesicular body membrane. It is found in the prevacuolar compartment membrane. It carries out the reaction a triacylglycerol + H2O = a diacylglycerol + a fatty acid + H(+). Its function is as follows. Lipase which is essential for lysis of subvacuolar cytoplasm to vacuole targeted bodies and intravacuolar autophagic bodies. Involved in the lysis of intravacuolar multivesicular body (MVB) vesicles. The intravacuolar membrane disintegration by ATG15 is critical to life span extension. The protein is Putative lipase ATG15 (ATG15) of Meyerozyma guilliermondii (strain ATCC 6260 / CBS 566 / DSM 6381 / JCM 1539 / NBRC 10279 / NRRL Y-324) (Yeast).